The sequence spans 308 residues: Nuclear transcription factor Y subunit A-5 (308 aa).

Residues Met-1–Ser-10 are compositionally biased toward basic and acidic residues. 2 disordered regions span residues Met-1 to Ser-26 and Gly-49 to Glu-71. Over residues Ser-11 to Ser-26 the composition is skewed to polar residues. The Subunit association domain (SAD) motif lies at Phe-181–Asn-204. A DNA-binding region (NFYA/HAP2-type) is located at residues Lys-211–Thr-236. A disordered region spans residues Met-251 to Ile-273.

Belongs to the NFYA/HAP2 subunit family. In terms of assembly, heterotrimeric transcription factor composed of three components, NF-YA, NF-YB and NF-YC. NF-YB and NF-YC must interact and dimerize for NF-YA association and DNA binding. In terms of tissue distribution, expressed in the whole plant, except roots. Present in etiolated seedlings.

Its subcellular location is the nucleus. Its function is as follows. Stimulates the transcription of various genes by recognizing and binding to a CCAAT motif in promoters. Involved in the blue light (BL) and abscisic acid (ABA) signaling pathways. The sequence is that of Nuclear transcription factor Y subunit A-5 (NFYA5) from Arabidopsis thaliana (Mouse-ear cress).